Here is a 134-residue protein sequence, read N- to C-terminus: Profilin-2 (134 aa).

A disulfide bridge links C13 with C118. The Involved in PIP2 interaction motif lies at 84–100 (AVIRGKKGAGGITIKKT). Phosphothreonine is present on T114.

Belongs to the profilin family. As to quaternary structure, occurs in many kinds of cells as a complex with monomeric actin in a 1:1 ratio. In terms of processing, phosphorylated by MAP kinases.

It localises to the cytoplasm. The protein resides in the cytoskeleton. Functionally, binds to actin and affects the structure of the cytoskeleton. At high concentrations, profilin prevents the polymerization of actin, whereas it enhances it at low concentrations. The sequence is that of Profilin-2 from Olea europaea (Common olive).